The sequence spans 370 residues: UDP-N-acetylglucosamine--N-acetylmuramyl-(pentapeptide) pyrophosphoryl-undecaprenol N-acetylglucosamine transferase (370 aa).

Residues Thr14–Gly16, Asn125, Arg168, Ser196, and Gln297 contribute to the UDP-N-acetyl-alpha-D-glucosamine site.

Belongs to the glycosyltransferase 28 family. MurG subfamily.

It localises to the cell inner membrane. It catalyses the reaction di-trans,octa-cis-undecaprenyl diphospho-N-acetyl-alpha-D-muramoyl-L-alanyl-D-glutamyl-meso-2,6-diaminopimeloyl-D-alanyl-D-alanine + UDP-N-acetyl-alpha-D-glucosamine = di-trans,octa-cis-undecaprenyl diphospho-[N-acetyl-alpha-D-glucosaminyl-(1-&gt;4)]-N-acetyl-alpha-D-muramoyl-L-alanyl-D-glutamyl-meso-2,6-diaminopimeloyl-D-alanyl-D-alanine + UDP + H(+). Its pathway is cell wall biogenesis; peptidoglycan biosynthesis. In terms of biological role, cell wall formation. Catalyzes the transfer of a GlcNAc subunit on undecaprenyl-pyrophosphoryl-MurNAc-pentapeptide (lipid intermediate I) to form undecaprenyl-pyrophosphoryl-MurNAc-(pentapeptide)GlcNAc (lipid intermediate II). This chain is UDP-N-acetylglucosamine--N-acetylmuramyl-(pentapeptide) pyrophosphoryl-undecaprenol N-acetylglucosamine transferase, found in Nitrobacter hamburgensis (strain DSM 10229 / NCIMB 13809 / X14).